The chain runs to 105 residues: Resistin-like beta (105 aa).

Positions 1–23 (MKPTLCFLFILVSLFPLIVPGNA) are cleaved as a signal peptide. Disulfide bonds link C49/C102, C61/C101, C70/C87, C72/C89, and C76/C91.

This sequence belongs to the resistin/FIZZ family. As to quaternary structure, homodimer; disulfide-linked. Heterodimer with RETNLG. Strongly expressed in colon, and at lower levels in ileum. In colon, found throughout the crypt and surface epithelium and in goblet cells (at protein level). Specific to the gastrointestinal tract; not detected in other tissues tested.

The protein resides in the secreted. Probable hormone. The protein is Resistin-like beta (Retnlb) of Mus musculus (Mouse).